Reading from the N-terminus, the 1010-residue chain is Sodium/potassium-transporting ATPase subunit alpha-3 (1010 aa).

A disordered region spans residues 1–21; the sequence is MGDKDDRFPKKKKGGTKDMDA. Over 1-74 the chain is Cytoplasmic; sequence MGDKDDRFPK…NALTPPPTTP (74 aa). Positions 69 to 71 are interaction with phosphoinositide-3 kinase; sequence PPP. The chain crosses the membrane as a helical span at residues 75–95; that stretch reads EWVKFCRQLFGGFSILLWTGA. Residues 96-118 are Extracellular-facing; sequence ILCFLAYAIQAATEDEPAGDNLY. A helical membrane pass occupies residues 119–139; the sequence is LGIVLTAVVVITGCFSYFQEA. Residues 140–275 lie on the Cytoplasmic side of the membrane; sequence KSSKIMESFK…TGKTPIAVEI (136 aa). The span at 201–216 shows a compositional bias: polar residues; the sequence is DNSSLTGESEPQSRSP. The tract at residues 201–221 is disordered; that stretch reads DNSSLTGESEPQSRSPDCTHD. The chain crosses the membrane as a helical span at residues 276-295; that stretch reads EHFIHIITGVAVFLGVTFFI. At 296 to 307 the chain is on the extracellular side; it reads LAIILGYTWLKA. A helical membrane pass occupies residues 308–325; the sequence is VIFLIGIIVANVPEGLLA. The Cytoplasmic segment spans residues 326–759; sequence TVTVCLTLTA…EEGRLIFDNL (434 aa). The 4-aspartylphosphate intermediate role is filled by Asp363. Mg(2+)-binding residues include Asp704 and Asp708. The chain crosses the membrane as a helical span at residues 760-779; the sequence is KKSIAYTLTSNIPEITPFLF. Residues 780–789 are Extracellular-facing; it reads FIIVNIPLAL. The chain crosses the membrane as a helical span at residues 790–810; that stretch reads GTITILCIDLGTDMGSAISLA. The Cytoplasmic portion of the chain corresponds to 811–830; it reads YETAESDIMKRQPRNPCRDK. A helical transmembrane segment spans residues 831-853; the sequence is LVNERLISIAYGQIGMIQALGGF. The Extracellular portion of the chain corresponds to 854–905; sequence FSYFVILAENGFLPSQLVGIRLNWDDRSLNDLEDSYGQQWTYEQRKIVEFTC. Residues 906–925 form a helical membrane-spanning segment; the sequence is HTAFFVSIVVVQWADLIICK. Topologically, residues 926 to 938 are cytoplasmic; the sequence is TRRNSVFQQGMKN. Residue Ser930 is modified to Phosphoserine; by PKA. Residues 939–957 traverse the membrane as a helical segment; the sequence is KILIFGLFEETALAAFLSY. Over 958–972 the chain is Extracellular; it reads CPGMDVALRMYPLKP. A helical transmembrane segment spans residues 973–993; sequence TWWFWAFPYSFLIFVYDEARK. Residues 994 to 1010 are Cytoplasmic-facing; sequence LILCRNPGGWVEKETYY.

The protein belongs to the cation transport ATPase (P-type) (TC 3.A.3) family. Type IIC subfamily. In terms of assembly, the sodium/potassium-transporting ATPase is composed of a catalytic alpha subunit, an auxiliary non-catalytic beta subunit and an additional regulatory subunit.

It localises to the cell membrane. It catalyses the reaction K(+)(out) + Na(+)(in) + ATP + H2O = K(+)(in) + Na(+)(out) + ADP + phosphate + H(+). In terms of biological role, this is the catalytic component of the active enzyme, which catalyzes the hydrolysis of ATP coupled with the exchange of sodium and potassium ions across the plasma membrane. This action creates the electrochemical gradient of sodium and potassium ions, providing the energy for active transport of various nutrients. In Oreochromis mossambicus (Mozambique tilapia), this protein is Sodium/potassium-transporting ATPase subunit alpha-3 (atp1a3).